A 269-amino-acid chain; its full sequence is MFSDKMILIAGPCVIEEEETTLEIAAKIQEIVAPYADHIHWIFKSSYDKANRSSIHSYRGPGLKEGLRILSKVKQTFGVEILTDVHSPEEARAAAEVCDILQIPAFLCRQTDLLVAAAETQAVINIKKGQFLSPWDMQGPVDKVLSTGNSKIILTERGCSFGYNNLVSDMRAIAVLSKMGFPVVFDGTHSVQLPGGLKTHSGGQTEFIPTLTRAALAAGAHGLFIETHTNPAIAKSDAASMLSLKAFEVLLPVWNQLYQCVRSFEMASV.

This sequence belongs to the KdsA family.

The protein resides in the cytoplasm. The enzyme catalyses D-arabinose 5-phosphate + phosphoenolpyruvate + H2O = 3-deoxy-alpha-D-manno-2-octulosonate-8-phosphate + phosphate. The protein operates within carbohydrate biosynthesis; 3-deoxy-D-manno-octulosonate biosynthesis; 3-deoxy-D-manno-octulosonate from D-ribulose 5-phosphate: step 2/3. Its pathway is bacterial outer membrane biogenesis; lipopolysaccharide biosynthesis. This Chlamydia abortus (strain DSM 27085 / S26/3) (Chlamydophila abortus) protein is 2-dehydro-3-deoxyphosphooctonate aldolase.